A 176-amino-acid polypeptide reads, in one-letter code: Isopentenyl-diphosphate Delta-isomerase (176 aa).

Mn(2+) contacts are provided by H22 and H28. The 135-residue stretch at 26–160 (LRHKAVSVFV…PERYTPWLRI (135 aa)) folds into the Nudix hydrolase domain. Residue C62 is part of the active site. H64 serves as a coordination point for Mn(2+). E82 contributes to the Mg(2+) binding site. Mn(2+)-binding residues include E108 and E110. E110 is a catalytic residue.

The protein belongs to the IPP isomerase type 1 family. Mg(2+) serves as cofactor. It depends on Mn(2+) as a cofactor.

It localises to the cytoplasm. The catalysed reaction is isopentenyl diphosphate = dimethylallyl diphosphate. Its pathway is isoprenoid biosynthesis; dimethylallyl diphosphate biosynthesis; dimethylallyl diphosphate from isopentenyl diphosphate: step 1/1. It participates in porphyrin-containing compound metabolism; chlorophyll biosynthesis. Catalyzes the 1,3-allylic rearrangement of the homoallylic substrate isopentenyl (IPP) to its highly electrophilic allylic isomer, dimethylallyl diphosphate (DMAPP). This is Isopentenyl-diphosphate Delta-isomerase from Dinoroseobacter shibae (strain DSM 16493 / NCIMB 14021 / DFL 12).